Reading from the N-terminus, the 426-residue chain is Phosphomethylpyrimidine synthase (426 aa).

Substrate contacts are provided by residues N65, M94, Y123, H162, 184-186 (SRG), 225-228 (DGMR), and E264. H268 serves as a coordination point for Zn(2+). Residue Y291 participates in substrate binding. H332 lines the Zn(2+) pocket. C408, C411, and C415 together coordinate [4Fe-4S] cluster.

Belongs to the ThiC family. Requires [4Fe-4S] cluster as cofactor.

It carries out the reaction 5-amino-1-(5-phospho-beta-D-ribosyl)imidazole + S-adenosyl-L-methionine = 4-amino-2-methyl-5-(phosphooxymethyl)pyrimidine + CO + 5'-deoxyadenosine + formate + L-methionine + 3 H(+). It participates in cofactor biosynthesis; thiamine diphosphate biosynthesis. Functionally, catalyzes the synthesis of the hydroxymethylpyrimidine phosphate (HMP-P) moiety of thiamine from aminoimidazole ribotide (AIR) in a radical S-adenosyl-L-methionine (SAM)-dependent reaction. The chain is Phosphomethylpyrimidine synthase from Methanococcus maripaludis (strain DSM 14266 / JCM 13030 / NBRC 101832 / S2 / LL).